The sequence spans 1396 residues: DNA ligase 6 (1396 aa).

Disordered stretches follow at residues 441–464 (KNAC…DTTP) and 562–599 (MNLT…GPGQ). 2 short sequence motifs (nuclear localization signal) span residues 572–579 (GKRGKSSG) and 886–893 (LRKISVQT). An ATP-binding site is contributed by Glu1037. The N6-AMP-lysine intermediate role is filled by Lys1039. The ATP site is built by Arg1044, Arg1060, Glu1092, and Phe1136. Glu1092 is a Mg(2+) binding site. Position 1207 (Glu1207) interacts with Mg(2+). 3 residues coordinate ATP: Lys1212, Arg1225, and Lys1231.

Belongs to the ATP-dependent DNA ligase family. Requires Mg(2+) as cofactor. As to expression, mostly expressed in buds and flowers, and, to a lower extent, in stems, leaves, siliques and seeds.

It localises to the nucleus. It carries out the reaction ATP + (deoxyribonucleotide)n-3'-hydroxyl + 5'-phospho-(deoxyribonucleotide)m = (deoxyribonucleotide)n+m + AMP + diphosphate.. DNA ligase that seals nicks in double-stranded DNA during DNA replication, DNA recombination and DNA repair. Required to maintain seed viability (e.g. longevity and storability) and during seed germination, probably by repairing DNA damage accumulated during seed development, storage and/or imbibition. Facilitates seed germination in cold conditions (2 degrees Celsius) and under oxidative stress (e.g. menadione, a genotoxic agent). Involved in repair of X-ray-induced damage. In terms of biological role, limits stable root transformation by A.tumefaciens T-DNA. The sequence is that of DNA ligase 6 from Arabidopsis thaliana (Mouse-ear cress).